The chain runs to 256 residues: MLRIADKTFDSHLFTGTGKFASSQLMMEAIRACGSQLVTLAMKRVNLRQHNDAILEPLIAAGVTLLPNTSGAKTAEEAIFAAHLAREALGTNWLKLEIHPDARWLLPDPIETLKAAEKLVQQGFVVLPYCGADPVLCKRLEEVGCAAVMPLGAPIGSNQGLETRAMLEIIIQQATVPVVVDAGIGVPSHAAQALEMGADAVLVNTAIAVADDPVNMAKAFRLAVEAGLLARQSGPGSRSHFAHATSPLTGFLEASE.

Residue Lys95 is the Schiff-base intermediate with DXP of the active site. 1-deoxy-D-xylulose 5-phosphate contacts are provided by residues Gly156, 182–183 (AG), and 204–205 (NT).

Belongs to the ThiG family. As to quaternary structure, homotetramer. Forms heterodimers with either ThiH or ThiS.

It localises to the cytoplasm. The catalysed reaction is [ThiS sulfur-carrier protein]-C-terminal-Gly-aminoethanethioate + 2-iminoacetate + 1-deoxy-D-xylulose 5-phosphate = [ThiS sulfur-carrier protein]-C-terminal Gly-Gly + 2-[(2R,5Z)-2-carboxy-4-methylthiazol-5(2H)-ylidene]ethyl phosphate + 2 H2O + H(+). It participates in cofactor biosynthesis; thiamine diphosphate biosynthesis. Catalyzes the rearrangement of 1-deoxy-D-xylulose 5-phosphate (DXP) to produce the thiazole phosphate moiety of thiamine. Sulfur is provided by the thiocarboxylate moiety of the carrier protein ThiS. In vitro, sulfur can be provided by H(2)S. This Escherichia coli O45:K1 (strain S88 / ExPEC) protein is Thiazole synthase.